The following is a 382-amino-acid chain: Mannitol-1-phosphate 5-dehydrogenase (382 aa).

4 to 15 lines the NAD(+) pocket; sequence AVHFGAGNIGRG.

Belongs to the mannitol dehydrogenase family.

The enzyme catalyses D-mannitol 1-phosphate + NAD(+) = beta-D-fructose 6-phosphate + NADH + H(+). In Vibrio vulnificus (strain CMCP6), this protein is Mannitol-1-phosphate 5-dehydrogenase.